The chain runs to 541 residues: Metal transporter Nramp1 (541 aa).

Asparagine 17 is a glycosylation site (N-linked (GlcNAc...) asparagine). The next 10 helical transmembrane spans lie at 45–65 (LFAY…PGNF), 78–98 (ELLW…SLAA), 122–142 (FILW…EVIG), 153–173 (IPVW…LALQ), 182–202 (LFIA…LGYA), 222–242 (GAAG…NLFL), 271–291 (GFAL…SGAV), 315–335 (FLLE…ALLA), 371–391 (SLAI…GAGK), and 392–412 (LIII…VPLL). Asparagine 426 is a glycosylation site (N-linked (GlcNAc...) asparagine). 2 consecutive transmembrane segments (helical) span residues 430 to 450 (ISSI…YYLA) and 465 to 485 (VAAI…LAGV). Asparagine 511 is a glycosylation site (N-linked (GlcNAc...) asparagine).

The protein belongs to the NRAMP (TC 2.A.55) family.

Its subcellular location is the membrane. Its function is as follows. Probable divalent metal transporter. This is Metal transporter Nramp1 from Populus trichocarpa (Western balsam poplar).